The chain runs to 250 residues: Methylthioribulose-1-phosphate dehydratase (250 aa).

Residues H103 and H105 each coordinate Zn(2+).

Belongs to the aldolase class II family. MtnB subfamily. It depends on Zn(2+) as a cofactor.

It carries out the reaction 5-(methylsulfanyl)-D-ribulose 1-phosphate = 5-methylsulfanyl-2,3-dioxopentyl phosphate + H2O. Its pathway is amino-acid biosynthesis; L-methionine biosynthesis via salvage pathway; L-methionine from S-methyl-5-thio-alpha-D-ribose 1-phosphate: step 2/6. Functionally, catalyzes the dehydration of methylthioribulose-1-phosphate (MTRu-1-P) into 2,3-diketo-5-methylthiopentyl-1-phosphate (DK-MTP-1-P). This is Methylthioribulose-1-phosphate dehydratase from Leptospira borgpetersenii serovar Hardjo-bovis (strain JB197).